The sequence spans 69 residues: Small integral membrane protein 20 (69 aa).

Topologically, residues 1–8 (MAAARNLR) are mitochondrial matrix. The helical transmembrane segment at 9 to 29 (TALIFGGFISMVGAAFYPIYF) threads the bilayer. Residues 30–69 (RPLMRLEEYQKEQAVNRAGIVQEDVQPPGLKVWSDPFGRK) are Mitochondrial intermembrane-facing. Residue phenylalanine 66 is modified to Phenylalanine amide.

Component of the MITRAC (mitochondrial translation regulation assembly intermediate of cytochrome c oxidase complex) complex, the core components of this complex being COA3/MITRAC12 and COX14. Interacts with COA3/MITRAC12 and COX4I1. Directly interacts with newly synthesized MT-CO1/COX1. As to expression, highly expressed in the hypothalamus, the spinal cord, and sensory ganglia (at protein level). Also expressed on in the epidermis and dermis layers of the skin (at protein level). Expressed in preadipocytes and adipocytes (at protein level). Expressed in the ovary, specifically in granulosa cells of follicles that have passed the primary stage and in oocytes (at protein level).

It is found in the mitochondrion inner membrane. The protein resides in the secreted. Functionally, component of the MITRAC (mitochondrial translation regulation assembly intermediate of cytochrome c oxidase complex) complex, that regulates cytochrome c oxidase assembly. Promotes the progression of complex assembly after the association of MT-CO1/COX1 with COX4I1 and COX6C. Chaperone-like assembly factor required to stabilize newly synthesized MT-CO1/COX1 and to prevent its premature turnover. Peptide involved in a broad spectrum of regulatory functions. Is a ligand for GPR173. As part of the reproductive cycle, it regulates gonadotropin-releasing hormone (GnRH) signaling in the hypothalamus and pituitary gland which augments the release of luteinizing hormone. More specifically, it regulates the expression of transcription factors CEBPB and POU2F1/OCT1 through the cAMP-PKA signaling pathway, which subsequently regulate the expression of GNRHR and KISS1. Plays a protective role in memory retention through activation of GNRHR. Regulates the secretion of AVP by hypothalamic neurons. Plays a role in the transduction of the itch sensation. Induces anxiolytic effects, reducing behavior associated with anxiety. Regulates food intake as well as satiation and satiety by increasing Nucb2 expression in neurons. In the ovary, it regulates follicular growth by stimulating granulosa cell proliferation by increasing the expression of GPR173, CREB1, CYP19A1, KITLG, FSHR, and LHCGR. It also increases the production of estradiol (E2). In the heart, it regulates contractility and relaxation by activating the AKT1-NOS3 and MAPK1-MAPK3 signaling pathways. It also plays a cardioprotective role during ischemia, where it activates the SAFE and RISK pathways. Stimulates the proliferation and differentiation of preadipocytes. In pancreatic islet cells, it induces proliferation of islet cells as well as the production of INS through activation of the MAPK1-MAPK3 signaling pathways. The polypeptide is Small integral membrane protein 20 (Mus musculus (Mouse)).